We begin with the raw amino-acid sequence, 84 residues long: Mu-Sparatoxin-Hp1 (84 aa).

The N-terminal stretch at 1–20 (MKIAIVMTLLLVAFSTASFA) is a signal peptide. Residues 21–35 (IEPIERAALDLVMAR) constitute a propeptide that is removed on maturation. 3 disulfides stabilise this stretch: cysteine 54–cysteine 68, cysteine 61–cysteine 73, and cysteine 67–cysteine 78. Leucine 82 is subject to Leucine amide.

In terms of tissue distribution, expressed by the venom gland.

The protein localises to the secreted. Its function is as follows. Weakly nhibits voltage-gated sodium channels Nav1.7/SCN9A. High concentration of the toxin (3 uM) inhibits Nav1.7/SCN9A currents by 79%. The chain is Mu-Sparatoxin-Hp1 from Heteropoda pingtungensis (Pingtung huntsman spider).